The sequence spans 478 residues: Zinc finger and SCAN domain-containing protein 26 (478 aa).

K17 participates in a covalent cross-link: Glycyl lysine isopeptide (Lys-Gly) (interchain with G-Cter in SUMO2). The SCAN box domain maps to 51 to 133; that stretch reads CKQFRQLRYE…VVLEDLQLDL (83 aa). 2 disordered regions span residues 159-181 and 200-226; these read GVQEQQVRHECEVTKPEKEKGEE and ESSGKISEPMEAHNEGSNLERHQAKPK. Basic and acidic residues-rich tracts occupy residues 164–181 and 207–226; these read QVRHECEVTKPEKEKGEE and EPMEAHNEGSNLERHQAKPK. The C2H2-type 1; degenerate zinc finger occupies 231–253; sequence YKCSEREQRFIQHLDLIEHASTH. C2H2-type zinc fingers lie at residues 282-304, 310-332, 338-360, 366-388, 394-416, 422-444, and 450-472; these read HQCHECGKAFQRSSHLVRHQKIH, YQCNECGKVFSQNAGLLEHLRIH, YLCIHCGKNFRRSSHLNRHQRIH, CECKECGKTFSQALLLTHHQRIH, HQCNECGKAFSLTSDLIRHHRIH, FKCNICQKAFRLNSHLAQHVRIH, and YQCSECGEAFRQRSGLFQHQRYH.

The protein resides in the nucleus. Its function is as follows. May be involved in transcriptional regulation. The chain is Zinc finger and SCAN domain-containing protein 26 (ZSCAN26) from Homo sapiens (Human).